Here is a 199-residue protein sequence, read N- to C-terminus: Ribonuclease P protein subunit p25 (199 aa).

Over residues 1–11 (MENFRKVRSEE) the composition is skewed to basic and acidic residues. Disordered stretches follow at residues 1–31 (MENF…FADL) and 146–199 (PRQL…DRTA). A Phosphoserine modification is found at Ser-172. Positions 190-199 (PEAENEDRTA) are enriched in acidic residues.

This sequence belongs to the histone-like Alba family. As to quaternary structure, component of nuclear RNase P and RNase MRP ribonucleoproteins. RNase P consists of a catalytic RNA moiety and 10 different protein chains; POP1, POP4, POP5, POP7, RPP14, RPP21, RPP25, RPP30, RPP38 and RPP40. Within the RNase P complex, POP1, POP7 and RPP25 form the 'finger' subcomplex, POP5, RPP14, RPP40 and homodimeric RPP30 form the 'palm' subcomplex, and RPP21, POP4 and RPP38 form the 'wrist' subcomplex. All subunits of the RNase P complex interact with the catalytic RNA. Several subunits of RNase P are also part of the RNase MRP complex. RNase MRP consists of a catalytic RNA moiety and about 8 protein subunits; POP1, POP7, RPP25, RPP30, RPP38, RPP40 and possibly also POP4 and POP5. POP7 forms a heterodimer with RPP25 that binds to the P3 stem loop of the catalytic RNA.

It is found in the nucleus. Its subcellular location is the nucleolus. Component of ribonuclease P, a ribonucleoprotein complex that generates mature tRNA molecules by cleaving their 5'-ends. Also a component of the MRP ribonuclease complex, which cleaves pre-rRNA sequences. This Mus musculus (Mouse) protein is Ribonuclease P protein subunit p25 (Rpp25).